Reading from the N-terminus, the 361-residue chain is Probable galacturonosyltransferase-like 7 (361 aa).

The chain crosses the membrane as a helical; Signal-anchor for type II membrane protein span at residues methionine 1–serine 21. The Lumenal segment spans residues proline 22–arginine 361. Residue asparagine 217 is glycosylated (N-linked (GlcNAc...) asparagine).

The protein belongs to the glycosyltransferase 8 family.

Its subcellular location is the golgi apparatus membrane. Its pathway is glycan metabolism; pectin biosynthesis. May be involved in pectin and/or xylans biosynthesis in cell walls. This Arabidopsis thaliana (Mouse-ear cress) protein is Probable galacturonosyltransferase-like 7 (GATL7).